Consider the following 299-residue polypeptide: Ribonuclease Z (299 aa).

Zn(2+) contacts are provided by H60, H62, D64, H65, H137, D207, and H265. Residue D64 is the Proton acceptor of the active site.

This sequence belongs to the RNase Z family. In terms of assembly, homodimer. Zn(2+) serves as cofactor.

The catalysed reaction is Endonucleolytic cleavage of RNA, removing extra 3' nucleotides from tRNA precursor, generating 3' termini of tRNAs. A 3'-hydroxy group is left at the tRNA terminus and a 5'-phosphoryl group is left at the trailer molecule.. In terms of biological role, zinc phosphodiesterase, which displays some tRNA 3'-processing endonuclease activity. Probably involved in tRNA maturation, by removing a 3'-trailer from precursor tRNA. The protein is Ribonuclease Z of Nitrosopumilus maritimus (strain SCM1).